The primary structure comprises 291 residues: Small ribosomal subunit protein uS2 (291 aa).

Positions 238-247 (DEESGDELDE) are enriched in acidic residues. Residues 238 to 291 (DEESGDELDESVSLHEEGREITDYENYTPPEEREYSVNDEGDVFDEDESLYEGR) are disordered. Over residues 249-259 (VSLHEEGREIT) the composition is skewed to basic and acidic residues. Residues 274 to 291 (VNDEGDVFDEDESLYEGR) show a composition bias toward acidic residues.

Belongs to the universal ribosomal protein uS2 family.

This is Small ribosomal subunit protein uS2 (rpsB) from Treponema pallidum (strain Nichols).